The chain runs to 326 residues: MNSESREDMAINSIKLLAGNSHPDLAEQISKKLGIPLSKVGVYQYSNKETSVTIGESLRDEDVYIIQTGIGEQEINDFLMELLILIHACKIASARKITTVIPNFPYARQDKKDKSRAPITAKLVANLLQTAGADHVITMDLHASQIQGFFHIPVDNLYAEPSVLNYIRTKTDFDNAILVSPDAGGAKRVAALADKLDLNFALIHKERQKANEVSKMVLVGDVTNKSCLLVDDMADTCGTLVKACDTLMEHGAKEVIAIVTHGIFSGSAREKLRNSRLSRIVCTNTVPVDLDLPIADQIDISPTFAEAIRRLHNGESVSYLFTHAPV.

Aspartate 140, histidine 142, histidine 151, and aspartate 155 together coordinate Mg(2+).

The protein belongs to the ribose-phosphate pyrophosphokinase family.

Its subcellular location is the cytoplasm. It catalyses the reaction D-ribose 5-phosphate + ATP = 5-phospho-alpha-D-ribose 1-diphosphate + AMP + H(+). It participates in metabolic intermediate biosynthesis; 5-phospho-alpha-D-ribose 1-diphosphate biosynthesis; 5-phospho-alpha-D-ribose 1-diphosphate from D-ribose 5-phosphate (route I): step 1/1. 5-phosphoribose 1-diphosphate synthase involved in nucleotide, histidine, and tryptophan biosynthesis. Active in heteromultimeric complexes with other 5-phosphoribose 1-diphosphate synthases (PRS2, PRS3, PRS4 and PRS5). The sequence is that of Ribose-phosphate pyrophosphokinase 4 (PRS4) from Saccharomyces cerevisiae (strain ATCC 204508 / S288c) (Baker's yeast).